A 423-amino-acid chain; its full sequence is Histidine--tRNA ligase (423 aa).

Belongs to the class-II aminoacyl-tRNA synthetase family. As to quaternary structure, homodimer.

The protein resides in the cytoplasm. It carries out the reaction tRNA(His) + L-histidine + ATP = L-histidyl-tRNA(His) + AMP + diphosphate + H(+). The sequence is that of Histidine--tRNA ligase from Actinobacillus pleuropneumoniae serotype 7 (strain AP76).